A 467-amino-acid chain; its full sequence is MSFPQLGYPQYLTAGQAAVYGGERPGVLAAAAAAAAAAAAAGSGRPTGAELGSSSTAAVTSVLGMYASPYSAPNYSAFLPYTTDLTLFSQMGSQYELKDNPGVHPATFAAHTTPGYYPYGQFQYGDPGRPKNATRESTGTLKAWLNEHRKNPYPTKGEKIMLAIITKMTLTQVSTWFANARRRLKKENKVTWGARSKEDDNIFGSDNEGDHEKNEDDEEIDLESIDIDKIDDNDGEQSNEEEDEKLEHLRQGEKESLKKESEVMIPSSDGLKPKDSMSLGKESSDTSNTRIVSPGGQGNIQVPPHSKPKIWSLAETATSPDGALKSSPPPSQGNHTSPPIQHPAFLPSHGLYTCQIGKFHNWTNGAFLTQSSLINMRSLLGVNPHHAAHHNHHHLQAHQQAPFLATNLSSLSSDKTPERTSPKHSDRENVPRTDSPPQLKPSFQAVRENTLSQQEGTSRILTALPSA.

The segment at residues 126–188 (DPGRPKNATR…NARRRLKKEN (63 aa)) is a DNA-binding region (homeobox; TALE-type). Disordered stretches follow at residues 197 to 306 (KEDD…PPHS), 318 to 344 (TSPDGALKSSPPPSQGNHTSPPIQHPA), and 410 to 467 (SLSS…LPSA). Composition is skewed to acidic residues over residues 215–225 (EDDEEIDLESI) and 233–244 (NDGEQSNEEEDE). The segment covering 245-262 (KLEHLRQGEKESLKKESE) has biased composition (basic and acidic residues). The span at 415 to 431 (KTPERTSPKHSDRENVP) shows a compositional bias: basic and acidic residues. Positions 447 to 460 (RENTLSQQEGTSRI) are enriched in polar residues.

This sequence belongs to the TALE/IRO homeobox family. As to expression, expressed early in neural differentiation in the neural plate, and expression continues in the neural tube after neural fold closure. Expressed in the presumptive midbrain territory. Also expressed in the prospective neural crest and the preplacodal field, anterior to the neural plate. Strongly expressed in the profundal placode and weakly expressed in the trigeminal placode. Also expressed in the mesoderm in the Spemann organizer from the start of gastrulation, and subsequently in its derivatives; namely in the notochord as well as in the somites of stage 25 embryos, and the somites and notochord of tailbud embryos. Also expressed in specific and overlapping dynamic patterns with irx2 and irx3 during pronephric kidney development. Renal expression begins in the dorsal region of the pronephric anlage at mid neurula stage and continues to at least tailbud stages where expression is confined to the intermediate tubule segment IT1. Renal expression is maintained at tadpole stages.

The protein localises to the nucleus. Its function is as follows. Acts partially redundantly with other irx members in neural patterning. Required for formation of the posterior forebrain, midbrain, hindbrain, and to a lesser extent, spinal cord. Acts early in neural plate development to induce expression of some but not all proneural genes, and specify a neural precursor state. Also up-regulates repressors that prevent neuronal differentiation. Patterns the neuroectoderm in both the anterior/posterior and dorsal/ventral axes. Acts primarily as a transcriptional repressor during neural development, and binds to the bmp4 promoter to repress gene expression and thus mediate down-regulation of bmp4 by wnt signaling. Controls multiple processes through bmp4-repression including neural plate development, neural crest specification and Spemann organizer development. Involved in the specification of the preplacodal field at the anterior border of the neural plate. Regulates the genetic cascade of interactions that are necessary for positioning the isthmus organizer and the formation of the midbrain-hindbrain boundary. Required during at least two stages of pronephros kidney development; during neurula stages, maintains transcription of key renal genes to define the size and identity of the pronephric anlage, probably in part through regulation of bmp-signaling. Subsequently required for proper formation of the intermediate tubule segment of the pronephros. Acts principally as a transcriptional activator during pronephros development. This chain is Iroquois-class homeodomain protein irx-1-A (irx1-a), found in Xenopus laevis (African clawed frog).